Reading from the N-terminus, the 426-residue chain is Putative acid phosphatase 1 (426 aa).

Residues methionine 1–alanine 18 form the signal peptide. The Extracellular segment spans residues glutamine 19–tryptophan 388. Catalysis depends on histidine 29, which acts as the Nucleophile. 2 N-linked (GlcNAc...) asparagine glycosylation sites follow: asparagine 37 and asparagine 145. Cysteines 133 and 369 form a disulfide. Catalysis depends on aspartate 276, which acts as the Proton donor. Asparagine 380 carries an N-linked (GlcNAc...) asparagine glycan. The chain crosses the membrane as a helical span at residues isoleucine 389 to valine 409. At arginine 410–asparagine 426 the chain is on the cytoplasmic side.

This sequence belongs to the histidine acid phosphatase family.

It localises to the membrane. It catalyses the reaction a phosphate monoester + H2O = an alcohol + phosphate. The protein is Putative acid phosphatase 1 of Caenorhabditis briggsae.